Here is a 250-residue protein sequence, read N- to C-terminus: MIILITNDDGFGSEGIKLLKEVARNFASEIWIVAPDTDRSGAARSLDYPVKQSIGIKQHSEREFSVSGTPADCVIIALNKVMNKKPDLILSGVNIGSNVGDDICYSGTIGAVMEGAARSIPSIALSQVYHDKIDWHNTKVFAPKVIAKLVKVGWPKNIVMSVNFPAKEKVKGVEFAEQGEYNIDGDLTFTENSNGSFSLNWSREHSGSGSINKIKEGFITITPVKLDFTDYDTLNTMKNSCADEFSSIAD.

Positions 8, 9, 40, and 94 each coordinate a divalent metal cation.

This sequence belongs to the SurE nucleotidase family. It depends on a divalent metal cation as a cofactor.

It localises to the cytoplasm. The enzyme catalyses a ribonucleoside 5'-phosphate + H2O = a ribonucleoside + phosphate. Nucleotidase that shows phosphatase activity on nucleoside 5'-monophosphates. This chain is 5'-nucleotidase SurE, found in Wolbachia pipientis wMel.